Reading from the N-terminus, the 214-residue chain is Probable nicotinate-nucleotide adenylyltransferase (214 aa).

It belongs to the NadD family.

The catalysed reaction is nicotinate beta-D-ribonucleotide + ATP + H(+) = deamido-NAD(+) + diphosphate. Its pathway is cofactor biosynthesis; NAD(+) biosynthesis; deamido-NAD(+) from nicotinate D-ribonucleotide: step 1/1. Its function is as follows. Catalyzes the reversible adenylation of nicotinate mononucleotide (NaMN) to nicotinic acid adenine dinucleotide (NaAD). This chain is Probable nicotinate-nucleotide adenylyltransferase, found in Buchnera aphidicola subsp. Acyrthosiphon pisum (strain 5A).